Consider the following 380-residue polypeptide: 1-deoxy-D-xylulose 5-phosphate reductoisomerase (380 aa).

The NADPH site is built by Thr-10, Gly-11, Ser-12, Ile-13, Gly-36, Arg-37, Asn-38, and Asn-120. 1-deoxy-D-xylulose 5-phosphate is bound at residue Lys-121. Glu-122 provides a ligand contact to NADPH. Asp-146 contributes to the Mn(2+) binding site. Residues Ser-147, Glu-148, Ser-172, and His-195 each coordinate 1-deoxy-D-xylulose 5-phosphate. Glu-148 provides a ligand contact to Mn(2+). Residue Gly-201 participates in NADPH binding. 4 residues coordinate 1-deoxy-D-xylulose 5-phosphate: Ser-208, Asn-213, Lys-214, and Glu-217. Glu-217 serves as a coordination point for Mn(2+).

Belongs to the DXR family. Mg(2+) serves as cofactor. The cofactor is Mn(2+).

It catalyses the reaction 2-C-methyl-D-erythritol 4-phosphate + NADP(+) = 1-deoxy-D-xylulose 5-phosphate + NADPH + H(+). It functions in the pathway isoprenoid biosynthesis; isopentenyl diphosphate biosynthesis via DXP pathway; isopentenyl diphosphate from 1-deoxy-D-xylulose 5-phosphate: step 1/6. Functionally, catalyzes the NADPH-dependent rearrangement and reduction of 1-deoxy-D-xylulose-5-phosphate (DXP) to 2-C-methyl-D-erythritol 4-phosphate (MEP). The protein is 1-deoxy-D-xylulose 5-phosphate reductoisomerase of Listeria welshimeri serovar 6b (strain ATCC 35897 / DSM 20650 / CCUG 15529 / CIP 8149 / NCTC 11857 / SLCC 5334 / V8).